The chain runs to 211 residues: NADH-quinone oxidoreductase subunit A (211 aa).

3 helical membrane-spanning segments follow: residues 7–27 (WSALAFILAAIGLVIFMLVVP), 61–81 (FYLVAIFFVIFDLEALYLYAY), and 88–108 (VGWIGYATALIFVVDLLIGLI).

It belongs to the complex I subunit 3 family. As to quaternary structure, NDH-1 is composed of 14 different subunits. Subunits NuoA, H, J, K, L, M, N constitute the membrane sector of the complex.

It is found in the cell inner membrane. It catalyses the reaction a quinone + NADH + 5 H(+)(in) = a quinol + NAD(+) + 4 H(+)(out). NDH-1 shuttles electrons from NADH, via FMN and iron-sulfur (Fe-S) centers, to quinones in the respiratory chain. The immediate electron acceptor for the enzyme in this species is believed to be ubiquinone. Couples the redox reaction to proton translocation (for every two electrons transferred, four hydrogen ions are translocated across the cytoplasmic membrane), and thus conserves the redox energy in a proton gradient. This Psychrobacter sp. (strain PRwf-1) protein is NADH-quinone oxidoreductase subunit A.